The following is a 117-amino-acid chain: MDKKSARIRRATRARRKLQELGATRLVVHRTPRHIYAQVIAPNGSEVLVAASTVEKAIAEQLKYTGNKDAAAAVGKAVAERALEKGIKDVSFDRSGFQYHGRVQALADAAREAGLQF.

This sequence belongs to the universal ribosomal protein uL18 family. Part of the 50S ribosomal subunit; part of the 5S rRNA/L5/L18/L25 subcomplex. Contacts the 5S and 23S rRNAs.

Functionally, this is one of the proteins that bind and probably mediate the attachment of the 5S RNA into the large ribosomal subunit, where it forms part of the central protuberance. The sequence is that of Large ribosomal subunit protein uL18 from Klebsiella pneumoniae subsp. pneumoniae (strain ATCC 700721 / MGH 78578).